We begin with the raw amino-acid sequence, 200 residues long: Large ribosomal subunit protein uL4 (200 aa).

Residues 42–65 (TRAQKTRSEVSGGGAKPWRQKGTG) form a disordered region.

The protein belongs to the universal ribosomal protein uL4 family. As to quaternary structure, part of the 50S ribosomal subunit.

One of the primary rRNA binding proteins, this protein initially binds near the 5'-end of the 23S rRNA. It is important during the early stages of 50S assembly. It makes multiple contacts with different domains of the 23S rRNA in the assembled 50S subunit and ribosome. Its function is as follows. Forms part of the polypeptide exit tunnel. This chain is Large ribosomal subunit protein uL4, found in Vibrio cholerae serotype O1 (strain ATCC 39541 / Classical Ogawa 395 / O395).